The chain runs to 313 residues: Malate dehydrogenase (313 aa).

Residues 11 to 16 (GAGNIG) and D35 each bind NAD(+). 2 residues coordinate substrate: R86 and R92. Residues N99 and 122 to 124 (ISN) contribute to the NAD(+) site. Substrate contacts are provided by N124 and R155. Catalysis depends on H179, which acts as the Proton acceptor.

The protein belongs to the LDH/MDH superfamily. MDH type 3 family.

It catalyses the reaction (S)-malate + NAD(+) = oxaloacetate + NADH + H(+). Catalyzes the reversible oxidation of malate to oxaloacetate. The chain is Malate dehydrogenase from Sorangium cellulosum (strain So ce56) (Polyangium cellulosum (strain So ce56)).